The sequence spans 200 residues: Snake venom metalloproteinase rhomb-I (200 aa).

Residues 4-200 (KYIELVVVAD…RKPQCILNKP (197 aa)) form the Peptidase M12B domain. 2 residues coordinate Ca(2+): Glu-7 and Asp-91. 3 cysteine pairs are disulfide-bonded: Cys-115–Cys-195, Cys-155–Cys-179, and Cys-157–Cys-162. His-140 is a Zn(2+) binding site. Glu-141 is a catalytic residue. Zn(2+)-binding residues include His-144 and His-150. Cys-195 and Asn-198 together coordinate Ca(2+).

Monomer. It depends on Zn(2+) as a cofactor. In terms of tissue distribution, expressed by the venom gland.

Its subcellular location is the secreted. Snake venom zinc metalloproteinase that induces hemorrhage. This chain is Snake venom metalloproteinase rhomb-I, found in Lachesis muta rhombeata (Bushmaster).